The sequence spans 246 residues: Probable phosphatase AHA_1344 (246 aa).

Zn(2+)-binding residues include histidine 8, histidine 10, histidine 16, histidine 41, glutamate 74, histidine 102, histidine 132, aspartate 193, and histidine 195.

The protein belongs to the PHP family. Zn(2+) is required as a cofactor.

The sequence is that of Probable phosphatase AHA_1344 from Aeromonas hydrophila subsp. hydrophila (strain ATCC 7966 / DSM 30187 / BCRC 13018 / CCUG 14551 / JCM 1027 / KCTC 2358 / NCIMB 9240 / NCTC 8049).